Reading from the N-terminus, the 405-residue chain is MMSPQEQLERIKFGTADFINDEDMLKKLKRSIETKKPLNIKLGADPTRPDIHLGHTVVINKLKTFQDLGHKVSFLIGDFTAMIGDPSGKNSTRPMLTREEIEENGRSYAKQIFKILDPEKTEIVYNSSWIMKMTPAEFITMTSKYTVAQLLEREDFTKRYRSGTPIGIHEFIYPLTQGYDSVALKTDVELGGTDQKFNLLVGRAMQAAYGMEAQCVLTMPILEGIDGVNKMSKSLDNYISVVDTPKDMFGKTMRISDELMYRWYELLTDVGAAGLNQLRADVAEGRKHPRTVKVELAKFLIKRFHSQAEAQAAEDEFNRIFVEKGLPDEVPDFEVEAETQMGLAALMVKAQLAASNSEAGRLIQGGGVQIDGEKVSDPRLKIDLKSGASFVLKAGKKKFVKIVVK.

The short motif at 46 to 55 (PTRPDIHLGH) is the 'HIGH' region element. Positions 230–234 (KMSKS) match the 'KMSKS' region motif. Residue Lys-233 participates in ATP binding. An S4 RNA-binding domain is found at 341-404 (MGLAALMVKA…GKKKFVKIVV (64 aa)).

This sequence belongs to the class-I aminoacyl-tRNA synthetase family. TyrS type 2 subfamily. Homodimer.

It localises to the cytoplasm. It catalyses the reaction tRNA(Tyr) + L-tyrosine + ATP = L-tyrosyl-tRNA(Tyr) + AMP + diphosphate + H(+). Catalyzes the attachment of tyrosine to tRNA(Tyr) in a two-step reaction: tyrosine is first activated by ATP to form Tyr-AMP and then transferred to the acceptor end of tRNA(Tyr). The protein is Tyrosine--tRNA ligase of Bdellovibrio bacteriovorus (strain ATCC 15356 / DSM 50701 / NCIMB 9529 / HD100).